The primary structure comprises 298 residues: Homoserine kinase (298 aa).

79 to 89 (PIARGLGSSGA) serves as a coordination point for ATP.

Belongs to the GHMP kinase family. Homoserine kinase subfamily.

It localises to the cytoplasm. It carries out the reaction L-homoserine + ATP = O-phospho-L-homoserine + ADP + H(+). Its pathway is amino-acid biosynthesis; L-threonine biosynthesis; L-threonine from L-aspartate: step 4/5. Its function is as follows. Catalyzes the ATP-dependent phosphorylation of L-homoserine to L-homoserine phosphate. The chain is Homoserine kinase from Pyrobaculum islandicum (strain DSM 4184 / JCM 9189 / GEO3).